Reading from the N-terminus, the 438-residue chain is Na(+)/H(+) antiporter NhaA (438 aa).

The next 11 membrane-spanning stretches (helical) occupy residues 23 to 43 (FGGI…NSFL), 62 to 82 (FFIG…LFFL), 104 to 124 (SFPV…YFFL), 133 to 153 (GFGI…MLLG), 162 to 182 (VFLI…IALF), 185 to 205 (TNLK…LAIL), 212 to 232 (SLIP…QSGI), 302 to 322 (FLAP…NAGV), 337 to 357 (LGVI…ITFI), 372 to 392 (WWHI…SMFI), and 410 to 430 (IAIL…LFAL).

It belongs to the NhaA Na(+)/H(+) (TC 2.A.33) antiporter family.

It is found in the cell inner membrane. It catalyses the reaction Na(+)(in) + 2 H(+)(out) = Na(+)(out) + 2 H(+)(in). Its function is as follows. Na(+)/H(+) antiporter that extrudes sodium in exchange for external protons. This Helicobacter pylori (strain J99 / ATCC 700824) (Campylobacter pylori J99) protein is Na(+)/H(+) antiporter NhaA.